The chain runs to 185 residues: Crossover junction endodeoxyribonuclease RuvC (185 aa).

Active-site residues include D16, E75, and D147. The Mg(2+) site is built by D16, E75, and D147.

The protein belongs to the RuvC family. In terms of assembly, homodimer which binds Holliday junction (HJ) DNA. The HJ becomes 2-fold symmetrical on binding to RuvC with unstacked arms; it has a different conformation from HJ DNA in complex with RuvA. In the full resolvosome a probable DNA-RuvA(4)-RuvB(12)-RuvC(2) complex forms which resolves the HJ. Requires Mg(2+) as cofactor.

The protein resides in the cytoplasm. It catalyses the reaction Endonucleolytic cleavage at a junction such as a reciprocal single-stranded crossover between two homologous DNA duplexes (Holliday junction).. Functionally, the RuvA-RuvB-RuvC complex processes Holliday junction (HJ) DNA during genetic recombination and DNA repair. Endonuclease that resolves HJ intermediates. Cleaves cruciform DNA by making single-stranded nicks across the HJ at symmetrical positions within the homologous arms, yielding a 5'-phosphate and a 3'-hydroxyl group; requires a central core of homology in the junction. The consensus cleavage sequence is 5'-(A/T)TT(C/G)-3'. Cleavage occurs on the 3'-side of the TT dinucleotide at the point of strand exchange. HJ branch migration catalyzed by RuvA-RuvB allows RuvC to scan DNA until it finds its consensus sequence, where it cleaves and resolves the cruciform DNA. This chain is Crossover junction endodeoxyribonuclease RuvC, found in Aromatoleum aromaticum (strain DSM 19018 / LMG 30748 / EbN1) (Azoarcus sp. (strain EbN1)).